We begin with the raw amino-acid sequence, 139 residues long: S-adenosylmethionine decarboxylase proenzyme (139 aa).

Ser63 (schiff-base intermediate with substrate; via pyruvic acid) is an active-site residue. Ser63 bears the Pyruvic acid (Ser); by autocatalysis mark. The Proton acceptor; for processing activity role is filled by His68. The active-site Proton donor; for catalytic activity is Cys83.

The protein belongs to the prokaryotic AdoMetDC family. Type 1 subfamily. As to quaternary structure, heterotetramer of two alpha and two beta chains arranged as a dimer of alpha/beta heterodimers. Requires pyruvate as cofactor. Is synthesized initially as an inactive proenzyme. Formation of the active enzyme involves a self-maturation process in which the active site pyruvoyl group is generated from an internal serine residue via an autocatalytic post-translational modification. Two non-identical subunits are generated from the proenzyme in this reaction, and the pyruvate is formed at the N-terminus of the alpha chain, which is derived from the carboxyl end of the proenzyme. The post-translation cleavage follows an unusual pathway, termed non-hydrolytic serinolysis, in which the side chain hydroxyl group of the serine supplies its oxygen atom to form the C-terminus of the beta chain, while the remainder of the serine residue undergoes an oxidative deamination to produce ammonia and the pyruvoyl group blocking the N-terminus of the alpha chain.

It catalyses the reaction S-adenosyl-L-methionine + H(+) = S-adenosyl 3-(methylsulfanyl)propylamine + CO2. It participates in amine and polyamine biosynthesis; S-adenosylmethioninamine biosynthesis; S-adenosylmethioninamine from S-adenosyl-L-methionine: step 1/1. Functionally, catalyzes the decarboxylation of S-adenosylmethionine to S-adenosylmethioninamine (dcAdoMet), the propylamine donor required for the synthesis of the polyamines spermine and spermidine from the diamine putrescine. The sequence is that of S-adenosylmethionine decarboxylase proenzyme from Pyrococcus abyssi (strain GE5 / Orsay).